The sequence spans 397 residues: Proteinase-activated receptor 2 (397 aa).

A signal peptide spans 1 to 25 (MRSLSLAWLLGGITLLAASASCNRT). A glycan (N-linked (GlcNAc...) asparagine) is linked at Asn-23. Residues 26-36 (VNAPGPNSKGR) constitute a propeptide, removed for receptor activation. The Extracellular portion of the chain corresponds to 37-71 (SLIGRLDTPPPITGKGAPVEPGFSVDEFSASVLTG). Residues 72-101 (KLTTVFLPVIYIIVFVIGLPSNGMALWVFF) traverse the membrane as a helical segment. Topologically, residues 102–108 (FRTKKKH) are cytoplasmic. A helical transmembrane segment spans residues 109–137 (PAVIYMANLALADLLSVIWFPLKISYHLH). The Extracellular segment spans residues 138–149 (GNDWTYGDALCK). Cys-148 and Cys-226 are oxidised to a cystine. The chain crosses the membrane as a helical span at residues 150–177 (VLIGFFYGNMYCSILFMTCLSVQRYWVI). Residues 178–183 (VNPMGH) are Cytoplasmic-facing. Residues 184-211 (SRKRANIAVGVSLAIWLLIFLVTIPLYV) form a helical membrane-spanning segment. The Extracellular portion of the chain corresponds to 212–235 (MRQTIYIPALNITTCHDVLPEEVL). An N-linked (GlcNAc...) asparagine glycan is attached at Asn-222. The chain crosses the membrane as a helical span at residues 236 to 269 (VGDMFSYFLSLAIGVFLFPALLTASAYVLMIKTL). Residues 270-277 (RSSAMDEH) lie on the Cytoplasmic side of the membrane. A helical membrane pass occupies residues 278 to 317 (SEKKRRRAIRLIITVLSMYFICFAPSNVLLVVHYFLIKSQ). Residues 318–323 (RQSHVY) are Extracellular-facing. The chain crosses the membrane as a helical span at residues 324 to 347 (ALYLVALCLSTLNSCIDPFVYYFV). Residues 348 to 397 (SKDFRDQARNALLCRSVRTVKRMQISLTSNKFSRKSSSYSSSSTSVKTSY) lie on the Cytoplasmic side of the membrane. Cys-361 is lipidated: S-palmitoyl cysteine.

Belongs to the G-protein coupled receptor 1 family. As to quaternary structure, interacts with TLR4, COPS5 and TMED2. Interacts with GNAQ, GNA11, GNA12, GNA13 and GNA14. A proteolytic cleavage generates a new N-terminus that functions as a tethered ligand. Activating serine proteases include trypsin, mast cell tryptase, coagulation factors VII and Xa, myeloblastin/PRTN3 and membrane-type serine protease 1/ST14. Proposed subsequent cleavage by serine proteases is leading to receptor deactivation and include neutrophil elastase and cathepsin G. At least in part, implicated proteases are also shown to activate the receptor; the glycosylation status of the receptor is thought to contribute to the difference. In terms of processing, N-glycosylated and sialylated. Post-translationally, multiple phosphorylated on serine and threonine residues in the cytoplasmic region upon receptor activation; required for receptor desensitization and recruitment of beta-arrestin. Monoubiquitinated by Cbl at the plasma membrane and in early endosomes; not required for receptor endocytosis but for translocation to late endosomes or lysosomes. Deubiquitination involves Stambp and Usp8; required for lysosomal trafficking and receptor degradation.

The protein resides in the cell membrane. Its function is as follows. Receptor for trypsin and trypsin-like enzymes coupled to G proteins. Its function is mediated through the activation of several signaling pathways including phospholipase C (PLC), intracellular calcium, mitogen-activated protein kinase (MAPK), I-kappaB kinase/NF-kappaB and Rho. Can also be transactivated by cleaved F2R/PAR1. Involved in modulation of inflammatory responses and regulation of innate and adaptive immunity, and acts as a sensor for proteolytic enzymes generated during infection. Generally is promoting inflammation. Can signal synergistically with TLR4 and probably TLR2 in inflammatory responses and modulates Tlr3 signaling. Has a protective role in establishing the endothelial barrier; the activity involves coagulation factor X. Regulates endothelial cell barrier integrity during neutrophil extravasation, probably following proteolytic cleavage by PRTN3. Proposed to have a bronchoprotective role in airway epithelium, but also shown to compromise the airway epithelial barrier by interrupting E-cadherin adhesion. Involved in the regulation of vascular tone; activation results in hypotension presumably mediated by vasodilation. Associates with a subset of G proteins alpha subunits such as GNAQ, GNA11, GNA14, GNA12 and GNA13, but probably not with G(o)-alpha, G(i) subunit alpha-1 and G(i) subunit alpha-2. Believed to be a class B receptor which internalizes as a complex with arrestin and traffic with it to endosomal vesicles, presumably as desensitized receptor, for extended periods of time. Mediates inhibition of TNF-alpha stimulated JNK phosphorylation via coupling to G GNAQ and GNA11; the function involves dissociation of RIPK1 and Tradd from TNFR1. Mediates phosphorylation of nuclear factor NF-kappa-B RELA subunit at 'Ser-536'; the function involves Ikbkb and is predominantly independent of G proteins. Involved in cellular migration. Involved in cytoskeletal rearrangement and chemotaxis through beta-arrestin-promoted scaffolds; the function is independent of GNAQ and GNA11 and involves promotion of cofilin dephosphorylation and actin filament severing. Induces redistribution of COPS5 from the plasma membrane to the cytosol and activation of the JNK cascade is mediated by Cops5. Involved in the recruitment of leukocytes to the sites of inflammation and is the major PAR receptor capable of modulating eosinophil function such as pro-inflammatory cytokine secretion, superoxide production and degranulation. During inflammation promotes dendritic cell maturation, trafficking to the lymph nodes and subsequent T-cell activation. Involved in antimicrobial response of innate immune cells; activation enhances phagocytosis of Gram-positive and killing of Gram-negative bacteria. Acts synergistically with interferon-gamma in enhancing antiviral responses. Probably mediates activation of pro-inflammatory and pro-fibrotic responses in fibroblasts, triggered by coagulation factor Xa (F10). Probably mediates activation of barrier protective signaling responses in endothelial cells, triggered by coagulation factor Xa (F10). This Rattus norvegicus (Rat) protein is Proteinase-activated receptor 2 (F2rl1).